Here is a 193-residue protein sequence, read N- to C-terminus: Holliday junction branch migration complex subunit RuvA (193 aa).

Residues 1-64 (MITSLTGTIL…EDAHLLYGFM (64 aa)) are domain I. The interval 65 to 139 (TVAERDMFRL…DKMGGIAPGP (75 aa)) is domain II. Residues 139–143 (PMGRG) are flexible linker. The domain III stretch occupies residues 144–193 (GAGDPRQEAIAALLTLGYKPAQASQAIAGLADGLGLEDLIRQSLQNLSRH).

The protein belongs to the RuvA family. As to quaternary structure, homotetramer. Forms an RuvA(8)-RuvB(12)-Holliday junction (HJ) complex. HJ DNA is sandwiched between 2 RuvA tetramers; dsDNA enters through RuvA and exits via RuvB. An RuvB hexamer assembles on each DNA strand where it exits the tetramer. Each RuvB hexamer is contacted by two RuvA subunits (via domain III) on 2 adjacent RuvB subunits; this complex drives branch migration. In the full resolvosome a probable DNA-RuvA(4)-RuvB(12)-RuvC(2) complex forms which resolves the HJ.

The protein resides in the cytoplasm. In terms of biological role, the RuvA-RuvB-RuvC complex processes Holliday junction (HJ) DNA during genetic recombination and DNA repair, while the RuvA-RuvB complex plays an important role in the rescue of blocked DNA replication forks via replication fork reversal (RFR). RuvA specifically binds to HJ cruciform DNA, conferring on it an open structure. The RuvB hexamer acts as an ATP-dependent pump, pulling dsDNA into and through the RuvAB complex. HJ branch migration allows RuvC to scan DNA until it finds its consensus sequence, where it cleaves and resolves the cruciform DNA. The chain is Holliday junction branch migration complex subunit RuvA from Acidithiobacillus ferrooxidans (strain ATCC 53993 / BNL-5-31) (Leptospirillum ferrooxidans (ATCC 53993)).